The primary structure comprises 35 residues: Photosystem II reaction center protein M (35 aa).

A helical transmembrane segment spans residues 5–25; the sequence is IFGLTATALFIIIPTSFLLIL.

It belongs to the PsbM family. As to quaternary structure, PSII is composed of 1 copy each of membrane proteins PsbA, PsbB, PsbC, PsbD, PsbE, PsbF, PsbH, PsbI, PsbJ, PsbK, PsbL, PsbM, PsbT, PsbX, PsbY, PsbZ, Psb30/Ycf12, at least 3 peripheral proteins of the oxygen-evolving complex and a large number of cofactors. It forms dimeric complexes.

The protein resides in the plastid. The protein localises to the chloroplast thylakoid membrane. Functionally, one of the components of the core complex of photosystem II (PSII). PSII is a light-driven water:plastoquinone oxidoreductase that uses light energy to abstract electrons from H(2)O, generating O(2) and a proton gradient subsequently used for ATP formation. It consists of a core antenna complex that captures photons, and an electron transfer chain that converts photonic excitation into a charge separation. This subunit is found at the monomer-monomer interface. This is Photosystem II reaction center protein M from Tetradesmus obliquus (Green alga).